We begin with the raw amino-acid sequence, 892 residues long: Alanine--tRNA ligase (892 aa).

Positions 594, 598, 702, and 706 each coordinate Zn(2+).

This sequence belongs to the class-II aminoacyl-tRNA synthetase family. Zn(2+) is required as a cofactor.

The protein localises to the cytoplasm. It catalyses the reaction tRNA(Ala) + L-alanine + ATP = L-alanyl-tRNA(Ala) + AMP + diphosphate. Functionally, catalyzes the attachment of alanine to tRNA(Ala) in a two-step reaction: alanine is first activated by ATP to form Ala-AMP and then transferred to the acceptor end of tRNA(Ala). Also edits incorrectly charged Ser-tRNA(Ala) and Gly-tRNA(Ala) via its editing domain. The protein is Alanine--tRNA ligase of Pyrobaculum arsenaticum (strain DSM 13514 / JCM 11321 / PZ6).